Reading from the N-terminus, the 184-residue chain is Putative manganese efflux pump MntP (184 aa).

6 consecutive transmembrane segments (helical) span residues 3–23, 36–56, 65–85, 103–123, 126–146, and 163–183; these read LLSM…ISVS, ALIS…LGWV, VSAL…LKMI, LLVL…SFAL, ISIW…SLAG, and ALGG…NVSF.

The protein belongs to the MntP (TC 9.B.29) family.

Its subcellular location is the cell membrane. In terms of biological role, probably functions as a manganese efflux pump. The protein is Putative manganese efflux pump MntP of Methanothermobacter thermautotrophicus (strain ATCC 29096 / DSM 1053 / JCM 10044 / NBRC 100330 / Delta H) (Methanobacterium thermoautotrophicum).